Consider the following 222-residue polypeptide: Eukaryotic translation initiation factor 3 subunit K (222 aa).

The region spanning 46 to 208 is the PCI domain; it reads YDLEANLAVL…KIKTKNITEK (163 aa).

The protein belongs to the eIF-3 subunit K family. Component of the eukaryotic translation initiation factor 3 (eIF-3) complex. The eIF-3 complex interacts with pix.

The protein localises to the cytoplasm. In terms of biological role, component of the eukaryotic translation initiation factor 3 (eIF-3) complex, which is involved in protein synthesis of a specialized repertoire of mRNAs and, together with other initiation factors, stimulates binding of mRNA and methionyl-tRNAi to the 40S ribosome. The eIF-3 complex specifically targets and initiates translation of a subset of mRNAs involved in cell proliferation. This chain is Eukaryotic translation initiation factor 3 subunit K, found in Drosophila ananassae (Fruit fly).